The primary structure comprises 495 residues: Cobyric acid synthase (495 aa).

Residues 250 to 444 (SLKISILRLP…LHGLFDNGAW (195 aa)) form the GATase cobBQ-type domain. Catalysis depends on cysteine 331, which acts as the Nucleophile. Histidine 436 is a catalytic residue.

This sequence belongs to the CobB/CobQ family. CobQ subfamily.

It functions in the pathway cofactor biosynthesis; adenosylcobalamin biosynthesis. Catalyzes amidations at positions B, D, E, and G on adenosylcobyrinic A,C-diamide. NH(2) groups are provided by glutamine, and one molecule of ATP is hydrogenolyzed for each amidation. The protein is Cobyric acid synthase of Rippkaea orientalis (strain PCC 8801 / RF-1) (Cyanothece sp. (strain PCC 8801)).